We begin with the raw amino-acid sequence, 541 residues long: Chaperonin GroEL (541 aa).

ATP is bound by residues Thr-29 to Pro-32, Asp-86 to Thr-90, Gly-413, and Asp-494.

The protein belongs to the chaperonin (HSP60) family. Forms a cylinder of 14 subunits composed of two heptameric rings stacked back-to-back. Interacts with the co-chaperonin GroES.

Its subcellular location is the cytoplasm. The catalysed reaction is ATP + H2O + a folded polypeptide = ADP + phosphate + an unfolded polypeptide.. Together with its co-chaperonin GroES, plays an essential role in assisting protein folding. The GroEL-GroES system forms a nano-cage that allows encapsulation of the non-native substrate proteins and provides a physical environment optimized to promote and accelerate protein folding. This chain is Chaperonin GroEL, found in Acetivibrio thermocellus (strain ATCC 27405 / DSM 1237 / JCM 9322 / NBRC 103400 / NCIMB 10682 / NRRL B-4536 / VPI 7372) (Clostridium thermocellum).